The chain runs to 33 residues: Beta-amanitin proprotein (33 aa).

Residues 1-10 constitute a propeptide that is removed on maturation; the sequence is MSDINATRLP. Positions 11-18 form a cross-link, cyclopeptide (Ile-Pro); the sequence is IWGIGCDP. Positions 12 to 16 form a cross-link, 2'-cysteinyl-6'-hydroxytryptophan sulfoxide (Trp-Cys); sequence WGIGC. Positions 19 to 33 are excised as a propeptide; it reads CVGDEVTALLTRGEA.

Belongs to the MSDIN fungal toxin family. Post-translationally, processed by the macrocyclase-peptidase enzyme POPB to yield a toxic cyclic decapeptide. POPB first removes 10 residues from the N-terminus. Conformational trapping of the remaining peptide forces the enzyme to release this intermediate rather than proceed to macrocyclization. The enzyme rebinds the remaining peptide in a different conformation and catalyzes macrocyclization of the N-terminal 8 residues.

Toxin belonging to the bicyclic octapeptides amatoxins that acts by binding non-competitively to RNA polymerase II and greatly slowing the elongation of transcripts from target promoters. The polypeptide is Beta-amanitin proprotein (Amanita fuligineoides).